We begin with the raw amino-acid sequence, 173 residues long: Small ribosomal subunit protein uS5 (173 aa).

The 64-residue stretch at 17 to 80 (WQERVIQIRR…ADGKKQLIEV (64 aa)) folds into the S5 DRBM domain.

The protein belongs to the universal ribosomal protein uS5 family. Part of the 30S ribosomal subunit. Contacts proteins S4 and S8.

In terms of biological role, with S4 and S12 plays an important role in translational accuracy. Its function is as follows. Located at the back of the 30S subunit body where it stabilizes the conformation of the head with respect to the body. The chain is Small ribosomal subunit protein uS5 from Gloeothece citriformis (strain PCC 7424) (Cyanothece sp. (strain PCC 7424)).